The following is a 413-amino-acid chain: 1-deoxy-D-xylulose 5-phosphate reductoisomerase (413 aa).

The NADPH site is built by T21, G22, S23, I24, G47, and N127. K128 serves as a coordination point for 1-deoxy-D-xylulose 5-phosphate. Residue E129 coordinates NADPH. Residue D151 coordinates Mn(2+). S152, E153, S177, and H200 together coordinate 1-deoxy-D-xylulose 5-phosphate. Residue E153 participates in Mn(2+) binding. G206 is an NADPH binding site. Positions 213, 218, 219, and 222 each coordinate 1-deoxy-D-xylulose 5-phosphate. Mn(2+) is bound at residue E222.

This sequence belongs to the DXR family. The cofactor is Mg(2+). Mn(2+) is required as a cofactor.

The catalysed reaction is 2-C-methyl-D-erythritol 4-phosphate + NADP(+) = 1-deoxy-D-xylulose 5-phosphate + NADPH + H(+). It functions in the pathway isoprenoid biosynthesis; isopentenyl diphosphate biosynthesis via DXP pathway; isopentenyl diphosphate from 1-deoxy-D-xylulose 5-phosphate: step 1/6. Its function is as follows. Catalyzes the NADPH-dependent rearrangement and reduction of 1-deoxy-D-xylulose-5-phosphate (DXP) to 2-C-methyl-D-erythritol 4-phosphate (MEP). This Mycobacterium bovis (strain ATCC BAA-935 / AF2122/97) protein is 1-deoxy-D-xylulose 5-phosphate reductoisomerase.